The following is a 332-amino-acid chain: Galactosylgalactosylxylosylprotein 3-beta-glucuronosyltransferase 1 (332 aa).

The Cytoplasmic segment spans residues 1–6; that stretch reads MPKRRD. Positions 3 to 5 are essential for transport from endoplasmic reticulum to Golgi apparatus and interaction with SAR1A; it reads KRR. The chain crosses the membrane as a helical; Signal-anchor for type II membrane protein span at residues 7–27; that stretch reads ILAIVLIVLPWTLLITVWHQS. Over 28–332 the chain is Lumenal; the sequence is TLAPLLAVHK…KGFTDPSVEI (305 aa). 91-93 contacts UDP-alpha-D-glucuronate; that stretch reads PTY. A phosphothreonine mark is found at threonine 103 and threonine 108. A UDP-alpha-D-glucuronate-binding site is contributed by aspartate 122. An N-linked (GlcNAc...) asparagine glycan is attached at asparagine 140. UDP-alpha-D-glucuronate contacts are provided by arginine 165 and arginine 170. Asparagine 184 is a glycosylation site (N-linked (GlcNAc...) asparagine). A UDP-alpha-D-glucuronate-binding site is contributed by 195–197; it reads DDD. Aspartate 197 is a binding site for Mn(2+). An interaction with galactose moiety of substrate glycoprotein region spans residues 243 to 252; sequence FDPHRPFAID. The Proton donor/acceptor role is filled by glutamate 282. Residue asparagine 301 is glycosylated (N-linked (GlcNAc...) asparagine). Residue 309-311 coordinates UDP-alpha-D-glucuronate; that stretch reads HTR.

The protein belongs to the glycosyltransferase 43 family. As to quaternary structure, homodimer. Interacts with SAR1A. It depends on Mn(2+) as a cofactor. Post-translationally, the soluble form derives from the membrane form by proteolytic processing.

Its subcellular location is the golgi apparatus membrane. The protein localises to the secreted. The catalysed reaction is 3-O-(beta-D-galactosyl-(1-&gt;3)-beta-D-galactosyl-(1-&gt;4)-beta-D-xylosyl)-L-seryl-[protein] + UDP-alpha-D-glucuronate = 3-O-(beta-D-GlcA-(1-&gt;3)-beta-D-Gal-(1-&gt;3)-beta-D-Gal-(1-&gt;4)-beta-D-Xyl)-L-seryl-[protein] + UDP + H(+). Its pathway is protein modification; protein glycosylation. Its function is as follows. Involved in the biosynthesis of L2/HNK-1 carbohydrate epitope on glycoproteins. Can also play a role in glycosaminoglycan biosynthesis. Substrates include asialo-orosomucoid (ASOR), asialo-fetuin, and asialo-neural cell adhesion molecule. Requires sphingomyelin for activity: stearoyl-sphingomyelin was the most effective, followed by palmitoyl-sphingomyelin and lignoceroyl-sphingomyelin. Activity was demonstrated only for sphingomyelin with a saturated fatty acid and not for that with an unsaturated fatty acid, regardless of the length of the acyl group. This Pan troglodytes (Chimpanzee) protein is Galactosylgalactosylxylosylprotein 3-beta-glucuronosyltransferase 1.